A 105-amino-acid polypeptide reads, in one-letter code: Thiosulfate sulfurtransferase GlpE (105 aa).

The Rhodanese domain occupies 15 to 103 (MQQGAILVDI…WCRAELPIDT (89 aa)). Cys-63 functions as the Cysteine persulfide intermediate in the catalytic mechanism.

It belongs to the GlpE family.

Its subcellular location is the cytoplasm. The enzyme catalyses thiosulfate + hydrogen cyanide = thiocyanate + sulfite + 2 H(+). It catalyses the reaction thiosulfate + [thioredoxin]-dithiol = [thioredoxin]-disulfide + hydrogen sulfide + sulfite + 2 H(+). Its function is as follows. Transferase that catalyzes the transfer of sulfur from thiosulfate to thiophilic acceptors such as cyanide or dithiols. May function in a CysM-independent thiosulfate assimilation pathway by catalyzing the conversion of thiosulfate to sulfite, which can then be used for L-cysteine biosynthesis. This chain is Thiosulfate sulfurtransferase GlpE, found in Haemophilus influenzae (strain PittEE).